A 399-amino-acid chain; its full sequence is Semaphorin-like protein 139 (399 aa).

An N-terminal signal peptide occupies residues 1-14 (MIPLLFILFYFTNC). The Sema domain occupies 15-399 (IEWHKFETSE…IPRMKKILKM (385 aa)).

This sequence belongs to the semaphorin family. Interacts with host VESPR.

Its subcellular location is the secreted. Its function is as follows. Acts as a semaphorin-like protein and binds to host plexin C1 receptor. May alter the movement of plexin C1-expressing cells including dendritic cells, monocytes, or granulocytes in the proximity of infected cells. May also regulate host cell cytoskeleton of neighboring cells to improve viral infection. The sequence is that of Semaphorin-like protein 139 (EVM139) from Ectromelia virus (strain Moscow) (ECTV).